Reading from the N-terminus, the 455-residue chain is Bifunctional protein GlmU (455 aa).

The interval Met-1–Arg-228 is pyrophosphorylase. Residues Leu-8–Gly-11, Lys-22, Gln-73, and Gly-78–Thr-79 contribute to the UDP-N-acetyl-alpha-D-glucosamine site. Mg(2+) is bound at residue Asp-103. UDP-N-acetyl-alpha-D-glucosamine is bound by residues Gly-140, Glu-154, Asn-169, and Asn-226. Asn-226 is a Mg(2+) binding site. The interval Ala-229–Asn-249 is linker. The tract at residues Gly-250–Lys-455 is N-acetyltransferase. Residues Arg-331 and Lys-349 each coordinate UDP-N-acetyl-alpha-D-glucosamine. The Proton acceptor role is filled by His-361. UDP-N-acetyl-alpha-D-glucosamine-binding residues include Tyr-364 and Asn-375. Acetyl-CoA contacts are provided by residues Asn-384–Tyr-385, Ala-421, and Arg-438.

The protein in the N-terminal section; belongs to the N-acetylglucosamine-1-phosphate uridyltransferase family. This sequence in the C-terminal section; belongs to the transferase hexapeptide repeat family. Homotrimer. Requires Mg(2+) as cofactor.

Its subcellular location is the cytoplasm. It carries out the reaction alpha-D-glucosamine 1-phosphate + acetyl-CoA = N-acetyl-alpha-D-glucosamine 1-phosphate + CoA + H(+). The enzyme catalyses N-acetyl-alpha-D-glucosamine 1-phosphate + UTP + H(+) = UDP-N-acetyl-alpha-D-glucosamine + diphosphate. It participates in nucleotide-sugar biosynthesis; UDP-N-acetyl-alpha-D-glucosamine biosynthesis; N-acetyl-alpha-D-glucosamine 1-phosphate from alpha-D-glucosamine 6-phosphate (route II): step 2/2. Its pathway is nucleotide-sugar biosynthesis; UDP-N-acetyl-alpha-D-glucosamine biosynthesis; UDP-N-acetyl-alpha-D-glucosamine from N-acetyl-alpha-D-glucosamine 1-phosphate: step 1/1. The protein operates within bacterial outer membrane biogenesis; LPS lipid A biosynthesis. In terms of biological role, catalyzes the last two sequential reactions in the de novo biosynthetic pathway for UDP-N-acetylglucosamine (UDP-GlcNAc). The C-terminal domain catalyzes the transfer of acetyl group from acetyl coenzyme A to glucosamine-1-phosphate (GlcN-1-P) to produce N-acetylglucosamine-1-phosphate (GlcNAc-1-P), which is converted into UDP-GlcNAc by the transfer of uridine 5-monophosphate (from uridine 5-triphosphate), a reaction catalyzed by the N-terminal domain. This is Bifunctional protein GlmU from Clostridium botulinum (strain Eklund 17B / Type B).